A 926-amino-acid polypeptide reads, in one-letter code: Sperm-associated antigen 1 (926 aa).

TPR repeat units lie at residues 209–242 (ATRE…LPTV), 244–275 (AYNN…EPGN), and 276–309 (VKAL…EPDN). The tract at residues 318–452 (EVERDLKNSE…ENPAGLKSQG (135 aa)) is disordered. Phosphoserine is present on residues S347 and S354. The segment covering 352–368 (GKSGRKHEDGGGDKKPA) has biased composition (basic and acidic residues). Residues 369 to 379 (EPAGAARAAQP) are compositionally biased toward low complexity. S423 carries the phosphoserine modification. Over residues 428–441 (AGGGATGHPGGGQG) the composition is skewed to gly residues. 6 TPR repeats span residues 445–478 (PAGL…LEPA), 487–520 (SILY…HPFS), 522–554 (KPLL…DCGL), 623–656 (FKAL…NNKE), 657–690 (CAIY…ADGN), and 692–724 (KAFY…DPSI). Basic and acidic residues-rich tracts occupy residues 758-769 (IQEVNEGKEEPG) and 784-799 (KGGK…EKLP). Residues 758–801 (IQEVNEGKEEPGRPAGEVSMGCLASEKGGKSSRSPEDPEKLPIA) form a disordered region. 781–788 (ASEKGGKS) is a GTP binding site. S791 is modified (phosphoserine).

Present in most tissues, including lung, with the strongest expression in brain, colon, kidney, and testis. In sperm and testis, detected in particular in pachytene primary spermatocytes. Up-regulated in pancreatic tumor tissues and not in normal pancreatic tissue.

Its subcellular location is the cytoplasm. It is found in the dynein axonemal particle. Functionally, may play a role in the cytoplasmic assembly of the ciliary dynein arms. May play a role in fertilization. Binds GTP and has GTPase activity. The chain is Sperm-associated antigen 1 (SPAG1) from Homo sapiens (Human).